The following is a 229-amino-acid chain: Cytidylate kinase (229 aa).

Residue 12–20 (GPSGSGKGT) coordinates ATP.

It belongs to the cytidylate kinase family. Type 1 subfamily.

Its subcellular location is the cytoplasm. It catalyses the reaction CMP + ATP = CDP + ADP. The enzyme catalyses dCMP + ATP = dCDP + ADP. In Azotobacter vinelandii (strain DJ / ATCC BAA-1303), this protein is Cytidylate kinase.